The sequence spans 209 residues: Glycine cleavage system H-like protein gcvH4 (209 aa).

Low complexity predominate over residues 35–51; it reads NNNNNNNNNNNNNNNNN. The segment at 35–56 is disordered; that stretch reads NNNNNNNNNNNNNNNNNRNKKL. The region spanning 73 to 159 is the Lipoyl-binding domain; it reads FATIGITNYV…KTTTTTTKIK (87 aa).

It belongs to the GcvH family.

In Dictyostelium discoideum (Social amoeba), this protein is Glycine cleavage system H-like protein gcvH4 (gcvH4).